The following is a 251-amino-acid chain: Squamosa promoter-binding-like protein 4 (251 aa).

The span at 1-15 shows a compositional bias: pro residues; that stretch reads MDWMPPPKPTSPRSP. A disordered region spans residues 1–64; sequence MDWMPPPKPT…RAEEGGGGGG (64 aa). The segment covering 24-43 has biased composition (low complexity); sequence AAVPGSSSGEVSAAAAAAAA. The SBP-type zinc finger occupies 65-142; that stretch reads EVRCQVEGCG…YDHNARRRKP (78 aa). Residues Cys68, Cys73, Cys90, His93, Cys109, Cys112, His116, and Cys128 each coordinate Zn(2+). Residues 125–141 carry the Bipartite nuclear localization signal motif; that stretch reads KRSCRRRLYDHNARRRK.

Expressed in stems, leaf sheaths, and young panicles.

It is found in the nucleus. Trans-acting factor that binds specifically to the consensus nucleotide sequence 5'-TNCGTACAA-3'. May be involved in panicle development. This chain is Squamosa promoter-binding-like protein 4 (SPL4), found in Oryza sativa subsp. japonica (Rice).